We begin with the raw amino-acid sequence, 65 residues long: Small, acid-soluble spore protein 2 (65 aa).

This sequence belongs to the alpha/beta-type SASP family.

In terms of biological role, SASP are bound to spore DNA. They are double-stranded DNA-binding proteins that cause DNA to change to an a-like conformation. They protect the DNA backbone from chemical and enzymatic cleavage and are thus involved in dormant spore's high resistance to UV light. The protein is Small, acid-soluble spore protein 2 (sasP-2) of Bacillus cereus.